The chain runs to 723 residues: Calpastatin (723 aa).

Disordered stretches follow at residues 1 to 402 (MNPT…PGRC) and 422 to 509 (STHS…LPPL). A compositionally biased stretch (basic residues) spans 21–30 (PNKKRHKKQA). A Glycyl lysine isopeptide (Lys-Gly) (interchain with G-Cter in SUMO2) cross-link involves residue K32. Over residues 46 to 84 (VVHEKKTQEVKPKEHTEPKSQPKHPSDTRSKHAPKEKAV) the composition is skewed to basic and acidic residues. K50 is subject to N6-acetyllysine. 2 stretches are compositionally biased toward low complexity: residues 85 to 94 (SKSSEQPPSE) and 113 to 125 (SAVP…ASAE). Residue S87 is modified to Phosphoserine. The residue at position 137 (T137) is a Phosphothreonine. Residues 157-173 (TALDDLIDTLGEPEETK) are compositionally biased toward acidic residues. One copy of the Inhibitory domain 1 repeat lies at 171–224 (ETKEDTTTYTGPEVSDPMSSTYIEELGKREVTLPPKYRELLNKEEGIAGPPPDS). Positions 195–216 (ELGKREVTLPPKYRELLNKEEG) are enriched in basic and acidic residues. Phosphoserine is present on residues S224 and S245. 2 stretches are compositionally biased toward basic and acidic residues: residues 249 to 263 (DAKK…EEAL) and 306 to 367 (PRPE…KPLS). The Inhibitory domain 2 repeat unit spans residues 307 to 359 (RPELDPSSIKEVDEAKAKEEKVKKCGEDEERVPSEYRLKPATDKDGKPLLPEA). Residues S367, S369, and S376 each carry the phosphoserine modification. The segment covering 378 to 396 (DFDRSKCKEKQSKPTEKNR) has biased composition (basic and acidic residues). S443 bears the Phosphoserine mark. Positions 445 to 504 (GKKEADPEDGKPVEDKVKEKAKEEDREKLGEREETIPPDYRLEEAKDKDGKPLPPKEVKE) are enriched in basic and acidic residues. The Inhibitory domain 3 repeat unit spans residues 449–502 (ADPEDGKPVEDKVKEKAKEEDREKLGEREETIPPDYRLEEAKDKDGKPLPPKEV). Phosphoserine is present on residues S519 and S530. The tract at residues 547-723 (SQTPAPTTQA…KPKADGKSTS (177 aa)) is disordered. The segment covering 548–560 (QTPAPTTQAAGPP) has biased composition (low complexity). The span at 562–571 (DSARDNKELD) shows a compositional bias: basic and acidic residues. 2 positions are modified to phosphoserine: S578 and S580. The stretch at 586–642 (PDPDEHKPVEDKVKEKAKAEHRDKLGERDDTIPPKYQHLLDDNKEGTPGKPKRSESP) is one Inhibitory domain 4 repeat. Residues 586–643 (PDPDEHKPVEDKVKEKAKAEHRDKLGERDDTIPPKYQHLLDDNKEGTPGKPKRSESPR) show a composition bias toward basic and acidic residues. A compositionally biased stretch (polar residues) spans 653 to 670 (NLQVPRTPLTPSQGTWTA). The span at 672 to 690 (PQLQKPQQTQQRTKTRSLL) shows a compositional bias: low complexity. The segment covering 701-723 (KAKDSTKAKEETSKPKADGKSTS) has biased composition (basic and acidic residues).

It belongs to the protease inhibitor I27 (calpastatin) family.

Specific inhibition of calpain (calcium-dependent cysteine protease). Plays a key role in postmortem tenderization of meat and have been proposed to be involved in muscle protein degradation in living tissue. The protein is Calpastatin (CAST) of Ovis aries (Sheep).